Consider the following 345-residue polypeptide: uncharacterized protein (345 aa).

It is found in the cell membrane. Functionally, involved in potassium and divalent cation transport. Enhances the transport activity of the cation/potassium transporter CzcD. This is an uncharacterized protein from Bacillus velezensis (strain DSM 23117 / BGSC 10A6 / LMG 26770 / FZB42) (Bacillus amyloliquefaciens subsp. plantarum).